The sequence spans 53 residues: Chlorophyll a-b binding protein 1, chloroplastic (53 aa).

Chlorophyll b is bound at residue Phe-18. Residues Glu-48 and His-51 each contribute to the chlorophyll a site. Chlorophyll b is bound at residue Arg-53.

Belongs to the light-harvesting chlorophyll a/b-binding (LHC) protein family. In terms of assembly, the LHC complex consists of chlorophyll a-b binding proteins. Requires Binds at least 14 chlorophylls (8 Chl-a and 6 Chl-b) and carotenoids such as lutein and neoxanthin. as cofactor. Post-translationally, photoregulated by reversible phosphorylation of its threonine residues.

The protein localises to the plastid. It localises to the chloroplast thylakoid membrane. Functionally, the light-harvesting complex (LHC) functions as a light receptor, it captures and delivers excitation energy to photosystems with which it is closely associated. The chain is Chlorophyll a-b binding protein 1, chloroplastic from Populus euphratica (Euphrates poplar).